Here is a 153-residue protein sequence, read N- to C-terminus: Ribosome maturation factor RimP (153 aa).

The protein belongs to the RimP family.

The protein localises to the cytoplasm. Its function is as follows. Required for maturation of 30S ribosomal subunits. The polypeptide is Ribosome maturation factor RimP (Clostridium tetani (strain Massachusetts / E88)).